Consider the following 107-residue polypeptide: Ig kappa chain V-VI region XRPC 24 (107 aa).

The framework-1 stretch occupies residues E1 to C23. The cysteines at positions 23 and 87 are disulfide-linked. Positions S24–H33 are complementarity-determining-1. Residues W34 to Y48 are framework-2. The tract at residues E49–S55 is complementarity-determining-2. Positions G56–C87 are framework-3. The tract at residues Q88–T96 is complementarity-determining-3. The interval F97–K106 is framework-4.

The chain is Ig kappa chain V-VI region XRPC 24 from Mus musculus (Mouse).